A 181-amino-acid chain; its full sequence is Regulator of G-protein signaling 10 (181 aa).

Residues 1–32 (MFNRAVSRLSRKRPPSDIHDSDGSSSSSHQSL) form a disordered region. Residues 23–32 (GSSSSSHQSL) show a composition bias toward low complexity. S24 and S41 each carry phosphoserine. The RGS domain occupies 41–156 (SLENLLEDPE…LKSDLFLKHK (116 aa)). Residue C74 is the site of S-palmitoyl cysteine attachment. Residues 158 to 181 (TEEEEEDLPDAQTAAKRASRIYNT) are disordered. S176 bears the Phosphoserine mark.

Interacts with GNAZ, GNAI1 and GNAI3. Associates specifically with the activated, GTP-bound forms of GNAZ and GNAI3.

It is found in the cytoplasm. The protein localises to the cytosol. It localises to the nucleus. In terms of biological role, regulates G protein-coupled receptor signaling cascades, including signaling downstream of the muscarinic acetylcholine receptor CHRM2. Inhibits signal transduction by increasing the GTPase activity of G protein alpha subunits, thereby driving them into their inactive GDP-bound form. Modulates the activity of potassium channels that are activated in response to CHRM2 signaling. Activity on GNAZ is inhibited by palmitoylation of the G-protein. This chain is Regulator of G-protein signaling 10 (RGS10), found in Homo sapiens (Human).